The following is a 411-amino-acid chain: Glutamate dehydrogenase 2 (411 aa).

K102 is an active-site residue.

Belongs to the Glu/Leu/Phe/Val dehydrogenases family.

Its subcellular location is the mitochondrion. It catalyses the reaction L-glutamate + NAD(+) + H2O = 2-oxoglutarate + NH4(+) + NADH + H(+). The enzyme catalyses L-glutamate + NADP(+) + H2O = 2-oxoglutarate + NH4(+) + NADPH + H(+). The protein is Glutamate dehydrogenase 2 (GDH2) of Arabidopsis thaliana (Mouse-ear cress).